Here is a 968-residue protein sequence, read N- to C-terminus: RNA polymerase-associated protein RapA (968 aa).

The 170-residue stretch at 163–332 (EVGSRYAPRV…FARLRLLDPD (170 aa)) folds into the Helicase ATP-binding domain. ATP is bound at residue 176-183 (DEVGLGKT). The DEAH box signature appears at 278–281 (DEAH). The 165-residue stretch at 491–655 (RVDWLIEFLK…EFADELINVL (165 aa)) folds into the Helicase C-terminal domain.

Belongs to the SNF2/RAD54 helicase family. RapA subfamily. As to quaternary structure, interacts with the RNAP. Has a higher affinity for the core RNAP than for the holoenzyme. Its ATPase activity is stimulated by binding to RNAP.

Its function is as follows. Transcription regulator that activates transcription by stimulating RNA polymerase (RNAP) recycling in case of stress conditions such as supercoiled DNA or high salt concentrations. Probably acts by releasing the RNAP, when it is trapped or immobilized on tightly supercoiled DNA. Does not activate transcription on linear DNA. Probably not involved in DNA repair. This chain is RNA polymerase-associated protein RapA, found in Shewanella frigidimarina (strain NCIMB 400).